Consider the following 338-residue polypeptide: Ketol-acid reductoisomerase (NADP(+)) (338 aa).

A KARI N-terminal Rossmann domain is found at 1–181 (MKVYYDKDAD…GGGKAGIIET (181 aa)). Residues 24 to 27 (YGSQ), R47, and S52 contribute to the NADP(+) site. H107 is an active-site residue. G133 is a binding site for NADP(+). Residues 182–327 (NFREETETDL…EKLRAMMPWI (146 aa)) enclose the KARI C-terminal knotted domain. Residues D190, E194, E226, and E230 each contribute to the Mg(2+) site. S251 is a substrate binding site.

Belongs to the ketol-acid reductoisomerase family. The cofactor is Mg(2+).

The catalysed reaction is (2R)-2,3-dihydroxy-3-methylbutanoate + NADP(+) = (2S)-2-acetolactate + NADPH + H(+). It catalyses the reaction (2R,3R)-2,3-dihydroxy-3-methylpentanoate + NADP(+) = (S)-2-ethyl-2-hydroxy-3-oxobutanoate + NADPH + H(+). It functions in the pathway amino-acid biosynthesis; L-isoleucine biosynthesis; L-isoleucine from 2-oxobutanoate: step 2/4. It participates in amino-acid biosynthesis; L-valine biosynthesis; L-valine from pyruvate: step 2/4. In terms of biological role, involved in the biosynthesis of branched-chain amino acids (BCAA). Catalyzes an alkyl-migration followed by a ketol-acid reduction of (S)-2-acetolactate (S2AL) to yield (R)-2,3-dihydroxy-isovalerate. In the isomerase reaction, S2AL is rearranged via a Mg-dependent methyl migration to produce 3-hydroxy-3-methyl-2-ketobutyrate (HMKB). In the reductase reaction, this 2-ketoacid undergoes a metal-dependent reduction by NADPH to yield (R)-2,3-dihydroxy-isovalerate. The protein is Ketol-acid reductoisomerase (NADP(+)) of Variovorax paradoxus (strain S110).